Consider the following 506-residue polypeptide: Dolabradiene monooxygenase (506 aa).

Residues Val5–Leu25 form a helical membrane-spanning segment. Cys443 serves as a coordination point for heme.

This sequence belongs to the cytochrome P450 family. Heme is required as a cofactor.

The protein localises to the membrane. It catalyses the reaction dolabradiene + reduced [NADPH--hemoprotein reductase] + O2 = 15,16-epoxydolabrene + oxidized [NADPH--hemoprotein reductase] + H2O + H(+). The enzyme catalyses 15,16-epoxydolabrene + reduced [NADPH--hemoprotein reductase] + O2 = 3beta-hydroxy-15,16-epoxydolabrene + oxidized [NADPH--hemoprotein reductase] + H2O + H(+). Functionally, involved in the production of antifungal dolabralexin phytoalexins in response to biotic and abiotic stresses. Catalyzes the epoxidation of dolabradiene at C-16, followed by hydroxylation at C-3, to yield the epoxides 15,16-epoxydolabrene (epoxydolabrene) and 3b-hydroxy-15,16-epoxydolabrene (epoxydolabranol). The sequence is that of Dolabradiene monooxygenase from Zea mays (Maize).